A 477-amino-acid polypeptide reads, in one-letter code: Zinc metalloproteinase/disintegrin (477 aa).

An N-terminal signal peptide occupies residues 1 to 20; that stretch reads MIEVLLVTICLAAFPYQGSS. The propeptide occupies 21–187; that stretch reads IILESGNVND…PIKKASQSNL (167 aa). The region spanning 193 to 389 is the Peptidase M12B domain; sequence RYIELFLVVD…DNPQCILNKQ (197 aa). Ca(2+)-binding residues include E196 and D280. Cystine bridges form between C304–C384, C344–C368, and C346–C351. H329 contributes to the Zn(2+) binding site. E330 is a catalytic residue. Zn(2+)-binding residues include H333 and H339. Residues C384 and N387 each coordinate Ca(2+). Residues 390-404 constitute a propeptide that is removed on maturation; sequence LRTDTVSTPVSGKNF. Positions 396–477 constitute a Disintegrin domain; that stretch reads STPVSGKNFG…AGCPRNPFHA (82 aa). 6 disulfides stabilise this stretch: C410-C425, C412-C420, C419-C442, C433-C439, C438-C463, and C451-C470. The short motif at 455-457 is the Cell attachment site element; sequence RGD.

This sequence belongs to the venom metalloproteinase (M12B) family. P-II subfamily. P-IIa sub-subfamily. Monomer. Requires Zn(2+) as cofactor. Expressed by the venom gland.

It is found in the secreted. Inhibited by 1,10-phenanthroline and EDTA. Impairs hemostasis in the envenomed animal. Does not exhibit detectable plasminogen activating activity. Has hemagglutinating activity on red blood cells. Cleaves insulin B chain at '38-Ala-|-Leu-39' and '40-Tyr-|-Leu-41' bonds. In terms of biological role, this recombinant protein shows high inhibitory activity on collagen-induced platelet aggregation. The polypeptide is Zinc metalloproteinase/disintegrin (Bothrops jararaca (Jararaca)).